Reading from the N-terminus, the 422-residue chain is Dihydroorotase (422 aa).

His57 and His59 together coordinate Zn(2+). Substrate contacts are provided by residues 59 to 61 and Asn91; that span reads HLR. Residues Asp149, His176, and His229 each coordinate Zn(2+). Substrate is bound at residue Asn275. Asp302 is a Zn(2+) binding site. Asp302 is an active-site residue. Residues His306 and 320-321 each bind substrate; that span reads FG.

It belongs to the metallo-dependent hydrolases superfamily. DHOase family. Class I DHOase subfamily. It depends on Zn(2+) as a cofactor.

The enzyme catalyses (S)-dihydroorotate + H2O = N-carbamoyl-L-aspartate + H(+). Its pathway is pyrimidine metabolism; UMP biosynthesis via de novo pathway; (S)-dihydroorotate from bicarbonate: step 3/3. Functionally, catalyzes the reversible cyclization of carbamoyl aspartate to dihydroorotate. The chain is Dihydroorotase from Endomicrobium trichonymphae.